The sequence spans 367 residues: Germination protease (367 aa).

A propeptide spanning residues Met1–Asp15 is cleaved from the precursor.

It belongs to the peptidase A25 family. As to quaternary structure, homotetramer. Post-translationally, autoproteolytically processed. The inactive tetrameric zymogen termed p46 autoprocesses to a smaller form termed p41, which is active only during spore germination.

It catalyses the reaction Endopeptidase action with P4 Glu or Asp, P1 preferably Glu &gt; Asp, P1' hydrophobic and P2' Ala.. Initiates the rapid degradation of small, acid-soluble proteins during spore germination. The sequence is that of Germination protease from Bacillus cytotoxicus (strain DSM 22905 / CIP 110041 / 391-98 / NVH 391-98).